The following is a 94-amino-acid chain: Co-chaperonin GroES (94 aa).

This sequence belongs to the GroES chaperonin family. As to quaternary structure, heptamer of 7 subunits arranged in a ring. Interacts with the chaperonin GroEL.

It is found in the cytoplasm. In terms of biological role, together with the chaperonin GroEL, plays an essential role in assisting protein folding. The GroEL-GroES system forms a nano-cage that allows encapsulation of the non-native substrate proteins and provides a physical environment optimized to promote and accelerate protein folding. GroES binds to the apical surface of the GroEL ring, thereby capping the opening of the GroEL channel. This chain is Co-chaperonin GroES, found in Listeria welshimeri serovar 6b (strain ATCC 35897 / DSM 20650 / CCUG 15529 / CIP 8149 / NCTC 11857 / SLCC 5334 / V8).